The sequence spans 74 residues: Cytochrome c oxidase subunit 2 (74 aa).

The Mitochondrial intermembrane portion of the chain corresponds to 1 to 14; that stretch reads MAHPMQLGFQDAAS. The chain crosses the membrane as a helical span at residues 15–45; the sequence is PVMEELLHFHDHALMIVFLISTAVLYIIVVT. The Mitochondrial matrix portion of the chain corresponds to 46–74; the sequence is VTTKLTDKYVLDAQEIEMVWTIMPAVVLI.

The protein belongs to the cytochrome c oxidase subunit 2 family. Component of the cytochrome c oxidase (complex IV, CIV), a multisubunit enzyme composed of 14 subunits. The complex is composed of a catalytic core of 3 subunits MT-CO1, MT-CO2 and MT-CO3, encoded in the mitochondrial DNA, and 11 supernumerary subunits COX4I, COX5A, COX5B, COX6A, COX6B, COX6C, COX7A, COX7B, COX7C, COX8 and NDUFA4, which are encoded in the nuclear genome. The complex exists as a monomer or a dimer and forms supercomplexes (SCs) in the inner mitochondrial membrane with NADH-ubiquinone oxidoreductase (complex I, CI) and ubiquinol-cytochrome c oxidoreductase (cytochrome b-c1 complex, complex III, CIII), resulting in different assemblies (supercomplex SCI(1)III(2)IV(1) and megacomplex MCI(2)III(2)IV(2)). Found in a complex with TMEM177, COA6, COX18, COX20, SCO1 and SCO2. Interacts with TMEM177 in a COX20-dependent manner. Interacts with COX20. Interacts with COX16. Cu cation serves as cofactor.

The protein localises to the mitochondrion inner membrane. It catalyses the reaction 4 Fe(II)-[cytochrome c] + O2 + 8 H(+)(in) = 4 Fe(III)-[cytochrome c] + 2 H2O + 4 H(+)(out). Its function is as follows. Component of the cytochrome c oxidase, the last enzyme in the mitochondrial electron transport chain which drives oxidative phosphorylation. The respiratory chain contains 3 multisubunit complexes succinate dehydrogenase (complex II, CII), ubiquinol-cytochrome c oxidoreductase (cytochrome b-c1 complex, complex III, CIII) and cytochrome c oxidase (complex IV, CIV), that cooperate to transfer electrons derived from NADH and succinate to molecular oxygen, creating an electrochemical gradient over the inner membrane that drives transmembrane transport and the ATP synthase. Cytochrome c oxidase is the component of the respiratory chain that catalyzes the reduction of oxygen to water. Electrons originating from reduced cytochrome c in the intermembrane space (IMS) are transferred via the dinuclear copper A center (CU(A)) of subunit 2 and heme A of subunit 1 to the active site in subunit 1, a binuclear center (BNC) formed by heme A3 and copper B (CU(B)). The BNC reduces molecular oxygen to 2 water molecules using 4 electrons from cytochrome c in the IMS and 4 protons from the mitochondrial matrix. The protein is Cytochrome c oxidase subunit 2 (mt-co2) of Amia calva (Bowfin).